Here is a 39-residue protein sequence, read N- to C-terminus: Photosystem II reaction center protein L (39 aa).

Residues 18 to 38 (SLYLGLLLIAVLGILFSSYFF) form a helical membrane-spanning segment.

It belongs to the PsbL family. As to quaternary structure, PSII is composed of 1 copy each of membrane proteins PsbA, PsbB, PsbC, PsbD, PsbE, PsbF, PsbH, PsbI, PsbJ, PsbK, PsbL, PsbM, PsbT, PsbX, PsbY, PsbZ, Psb30/Ycf12, peripheral proteins PsbO, CyanoQ (PsbQ), PsbU, PsbV and a large number of cofactors. It forms dimeric complexes.

The protein localises to the cellular thylakoid membrane. One of the components of the core complex of photosystem II (PSII). PSII is a light-driven water:plastoquinone oxidoreductase that uses light energy to abstract electrons from H(2)O, generating O(2) and a proton gradient subsequently used for ATP formation. It consists of a core antenna complex that captures photons, and an electron transfer chain that converts photonic excitation into a charge separation. This subunit is found at the monomer-monomer interface and is required for correct PSII assembly and/or dimerization. The polypeptide is Photosystem II reaction center protein L (Picosynechococcus sp. (strain ATCC 27264 / PCC 7002 / PR-6) (Agmenellum quadruplicatum)).